Consider the following 134-residue polypeptide: Small ribosomal subunit protein uS8c (134 aa).

It belongs to the universal ribosomal protein uS8 family. As to quaternary structure, part of the 30S ribosomal subunit.

It localises to the plastid. It is found in the chloroplast. In terms of biological role, one of the primary rRNA binding proteins, it binds directly to 16S rRNA central domain where it helps coordinate assembly of the platform of the 30S subunit. The polypeptide is Small ribosomal subunit protein uS8c (rps8) (Arabidopsis thaliana (Mouse-ear cress)).